We begin with the raw amino-acid sequence, 341 residues long: DNA-directed RNA polymerase subunit alpha (341 aa).

Positions 1 to 233 (MIQDEVPVSA…DLFLPFLHTE (233 aa)) are alpha N-terminal domain (alpha-NTD). An alpha C-terminal domain (alpha-CTD) region spans residues 262-341 (DRMAKEVAFK…NLPRNKFSID (80 aa)).

It belongs to the RNA polymerase alpha chain family. In terms of assembly, in plastids the minimal PEP RNA polymerase catalytic core is composed of four subunits: alpha, beta, beta', and beta''. When a (nuclear-encoded) sigma factor is associated with the core the holoenzyme is formed, which can initiate transcription.

The protein resides in the plastid. It localises to the chloroplast. It carries out the reaction RNA(n) + a ribonucleoside 5'-triphosphate = RNA(n+1) + diphosphate. In terms of biological role, DNA-dependent RNA polymerase catalyzes the transcription of DNA into RNA using the four ribonucleoside triphosphates as substrates. This chain is DNA-directed RNA polymerase subunit alpha, found in Angiopteris evecta (Mule's foot fern).